Here is a 501-residue protein sequence, read N- to C-terminus: Lysine--tRNA ligase (501 aa).

The Mg(2+) site is built by E402 and E409.

Belongs to the class-II aminoacyl-tRNA synthetase family. Homodimer. Mg(2+) serves as cofactor.

The protein resides in the cytoplasm. The enzyme catalyses tRNA(Lys) + L-lysine + ATP = L-lysyl-tRNA(Lys) + AMP + diphosphate. This is Lysine--tRNA ligase from Helicobacter pylori (strain Shi470).